Here is a 324-residue protein sequence, read N- to C-terminus: Methyltransferase pytC (324 aa).

Residues M1–C28 are disordered.

This sequence belongs to the methyltransferase superfamily. LaeA methyltransferase family.

The protein operates within secondary metabolite biosynthesis. Functionally, methyltransferase; part of the gene cluster that mediates the biosynthesis of pyranterreones, a family of antioxidative compounds. The first step of pyranonigrins biosynthesis is performed by the hybrid PKS-NRPS synthetase pytA that condenses 4 malonyl-CoA units ato the acetyl starter unit by the modular PKS of pytA. The acyl chain is then connected to an L-serine through the amide bond by the modular NRPS of pytA. A tetramic acid is formed and released from the PKS-NRPS pytA to give pyranterreone 5 with the help of the thioesterase pytI. Pyranterreone 5 could be methylated by pytC to afford pyranterreone 6. Both pyranterreones 5 and 6 are subsequently oxidized by the FAD-linked oxidoreductase pytB and the cytochrome P450 monooxygenase pytD to form the fused gamma-pyrone core, resulting in pyranterreones 7 and 11, respectively. The hydroxy group at C-8 of pyranterreones 7 and 11 are dehydrated by the aspartyl protease pytH to form a delta-7 double bond to give pyranterreones 3 and 1, 2 accordingly. The exo-methylene of pyranterreone 3 could be reduced into a pendant methyl by reductase pytE to provide pyranterreone 4, also known as cordylactam. Pyranterreone 4 can be reconverted to pyranterreone 3 through pytB-catalyzed dehydrogenation or further oxidized to pyranterreones 9 and 10. The protein is Methyltransferase pytC of Aspergillus terreus.